A 248-amino-acid polypeptide reads, in one-letter code: Protein canopy homolog 4 (248 aa).

The N-terminal stretch at 1–21 (MGPVRLGILLFLFLAVHEAWA) is a signal peptide. 3 disulfide bridges follow: Cys-38–Cys-196, Cys-41–Cys-184, and Cys-94–Cys-156. Residues 200-248 (TWTGKEITDGEEKTEGEEEQEEEEEEEEEEGGDKMTKTGSHPKLDREDL) form a disordered region. The span at 213-230 (TEGEEEQEEEEEEEEEEG) shows a compositional bias: acidic residues. Basic and acidic residues predominate over residues 231–248 (GDKMTKTGSHPKLDREDL).

Belongs to the canopy family. Interacts with TLR4.

It is found in the secreted. Its function is as follows. Plays a role in the regulation of the cell surface expression of TLR4. In Homo sapiens (Human), this protein is Protein canopy homolog 4 (CNPY4).